The primary structure comprises 1261 residues: ABC-type transmembrane transporter verA (1261 aa).

The chain crosses the membrane as a helical span at residues 41–61; sequence IGCAFAAVCSGAAMPLMALIL. The region spanning 41 to 334 is the ABC transmembrane type-1 1 domain; that stretch reads IGCAFAAVCS…LGPNMPSFIK (294 aa). Asparagine 67 is a glycosylation site (N-linked (GlcNAc...) asparagine). Helical transmembrane passes span 92 to 112, 166 to 186, 190 to 210, 270 to 290, and 308 to 328; these read LWFV…SFGF, LGIM…AFSQ, LTLV…FIVS, FVGL…AIGF, and ILSV…LGPN. In terms of domain architecture, ABC transporter 1 spans 374–618; that stretch reads VELRDMSFAY…GGLYKRLYDA (245 aa). N-linked (GlcNAc...) asparagine glycosylation is present at asparagine 396. Position 409–416 (409–416) interacts with ATP; sequence GPSGAGKS. N-linked (GlcNAc...) asparagine glycosylation is present at asparagine 463. 6 helical membrane-spanning segments follow: residues 686 to 706, 734 to 754, 808 to 828, 830 to 850, 913 to 933, and 950 to 970; these read YWPI…IFPV, LMFF…GFFM, MGLL…GLAY, WKFA…AGYL, VMTL…ALGF, and FFTV…LFGF. The 286-residue stretch at 691 to 976 folds into the ABC transmembrane type-1 2 domain; the sequence is LIGLVACVVT…LFGFSSNLGK (286 aa). N-linked (GlcNAc...) asparagine glycosylation is found at asparagine 1007 and asparagine 1021. An ABC transporter 2 domain is found at 1017-1255; sequence VDMQNVTFAY…QGNYFKMHES (239 aa). 1052 to 1059 serves as a coordination point for ATP; sequence GTSGSGKS. Residue asparagine 1106 is glycosylated (N-linked (GlcNAc...) asparagine).

The protein belongs to the ABC transporter superfamily. ABCB family. Multidrug resistance exporter (TC 3.A.1.201) subfamily.

Its subcellular location is the cell membrane. In terms of biological role, ABC-type transmembrane transporter; part of the gene cluster that mediates the biosynthesis of 11'-deoxyverticillin A, one of the dimeric epipolythiodioxopiperazines (ETPs) from the verticillin family that are toxic secondary metabolites. The verA multidrug transporter is probably involved in the secretion of 11'-deoxyverticillin A. The protein is ABC-type transmembrane transporter verA of Clonostachys rogersoniana.